Here is a 312-residue protein sequence, read N- to C-terminus: NAD-dependent protein deacylase Sirt4 (312 aa).

A mitochondrion-targeting transit peptide spans 1 to 16 (MRVGQLLRFRSTSLRS). One can recognise a Deacetylase sirtuin-type domain in the interval 28–312 (KPVVEDDIKR…FDFRNSKSVS (285 aa)). Residues 53-73 (GAGI…VGLY) and 134-137 (QNVD) contribute to the NAD(+) site. His152 functions as the Proton acceptor in the catalytic mechanism. Zn(2+) contacts are provided by Cys160, Cys163, Cys211, and Cys214. Residues 251–253 (GSS), 277–279 (NIG), and Cys295 contribute to the NAD(+) site.

Belongs to the sirtuin family. Class II subfamily. Zn(2+) is required as a cofactor.

Its subcellular location is the mitochondrion matrix. It carries out the reaction N(6)-acetyl-L-lysyl-[protein] + NAD(+) + H2O = 2''-O-acetyl-ADP-D-ribose + nicotinamide + L-lysyl-[protein]. NAD-dependent protein deacylase. Catalyzes the NAD-dependent hydrolysis of acyl groups from lysine residues. The polypeptide is NAD-dependent protein deacylase Sirt4 (Sirt4) (Drosophila melanogaster (Fruit fly)).